Consider the following 124-residue polypeptide: MPTINQLVRKERKKVIKKSKSPALVKCPQRRGVCTRVYTTTPKKPNSALRKVAKVRLTSGYEVISYIPGEGHNLQEHSIVLVRGGRVKDLPGVKYHIIRGALDTAGVANRKKSRSKYGTKKPKS.

Aspartate 89 bears the 3-methylthioaspartic acid mark.

This sequence belongs to the universal ribosomal protein uS12 family. Part of the 30S ribosomal subunit. Contacts proteins S8 and S17. May interact with IF1 in the 30S initiation complex.

With S4 and S5 plays an important role in translational accuracy. Functionally, interacts with and stabilizes bases of the 16S rRNA that are involved in tRNA selection in the A site and with the mRNA backbone. Located at the interface of the 30S and 50S subunits, it traverses the body of the 30S subunit contacting proteins on the other side and probably holding the rRNA structure together. The combined cluster of proteins S8, S12 and S17 appears to hold together the shoulder and platform of the 30S subunit. The sequence is that of Small ribosomal subunit protein uS12 from Nitratiruptor sp. (strain SB155-2).